We begin with the raw amino-acid sequence, 419 residues long: F-box/LRR-repeat protein At1g67190 (419 aa).

Residues 1 to 48 (MDYLPVEVIGNILSRLGGARDVVIASATCRKWREACRKHLQTLSFNSA) enclose the F-box domain. 9 LRR repeats span residues 53–82 (YRDL…SIMM), 96–124 (WLMY…EICG), 133–157 (LAHN…LSLS), 158–183 (YVSI…ELVS), 185–209 (EIAM…YFDG), 245–272 (HFKL…DVNH), 273–297 (FTMV…RLWD), 301–326 (DDDD…SLSY), and 356–381 (INDV…IIYG).

The polypeptide is F-box/LRR-repeat protein At1g67190 (Arabidopsis thaliana (Mouse-ear cress)).